A 400-amino-acid polypeptide reads, in one-letter code: Formate-dependent phosphoribosylglycinamide formyltransferase (400 aa).

Residues 22-23 and E82 each bind N(1)-(5-phospho-beta-D-ribosyl)glycinamide; that span reads EL. Residues R115, K157, 162-167, 197-200, and E205 contribute to the ATP site; these read SSGKGQ and EGFI. An ATP-grasp domain is found at 120-315; it reads RLAAETLGLP…EFELHARAIL (196 aa). 2 residues coordinate Mg(2+): E274 and E286. Residues D293, K362, and 369–370 contribute to the N(1)-(5-phospho-beta-D-ribosyl)glycinamide site; that span reads RR.

It belongs to the PurK/PurT family. As to quaternary structure, homodimer.

The catalysed reaction is N(1)-(5-phospho-beta-D-ribosyl)glycinamide + formate + ATP = N(2)-formyl-N(1)-(5-phospho-beta-D-ribosyl)glycinamide + ADP + phosphate + H(+). It functions in the pathway purine metabolism; IMP biosynthesis via de novo pathway; N(2)-formyl-N(1)-(5-phospho-D-ribosyl)glycinamide from N(1)-(5-phospho-D-ribosyl)glycinamide (formate route): step 1/1. In terms of biological role, involved in the de novo purine biosynthesis. Catalyzes the transfer of formate to 5-phospho-ribosyl-glycinamide (GAR), producing 5-phospho-ribosyl-N-formylglycinamide (FGAR). Formate is provided by PurU via hydrolysis of 10-formyl-tetrahydrofolate. In Cupriavidus metallidurans (strain ATCC 43123 / DSM 2839 / NBRC 102507 / CH34) (Ralstonia metallidurans), this protein is Formate-dependent phosphoribosylglycinamide formyltransferase.